The sequence spans 284 residues: Tropomyosin (284 aa).

A disordered region spans residues 1–39 (MDAIKKKMQAMKLEKDNAMDRADTLEQQNKEANIRAEKT). Positions 1-284 (MDAIKKKMQA…DQTFSELSGY (284 aa)) form a coiled coil. Positions 12-39 (KLEKDNAMDRADTLEQQNKEANIRAEKT) are enriched in basic and acidic residues.

This sequence belongs to the tropomyosin family. Homodimer.

In terms of biological role, tropomyosin, in association with the troponin complex, plays a central role in the calcium dependent regulation of muscle contraction. The protein is Tropomyosin (TM1) of Homarus americanus (American lobster).